The following is a 127-amino-acid chain: Fatty acid-binding protein, liver (127 aa).

At M1 the chain carries N-acetylmethionine. Residue S11 is modified to Phosphoserine. K31 and K36 each carry N6-succinyllysine. S39 is modified (phosphoserine). At K46 the chain carries N6-succinyllysine. T51 bears the Phosphothreonine mark. Phosphoserine is present on S56. N6-succinyllysine is present on residues K57, K78, and K90. S100 carries the phosphoserine modification. An N6-succinyllysine modification is found at K121.

It belongs to the calycin superfamily. Fatty-acid binding protein (FABP) family. In terms of assembly, monomer.

It localises to the cytoplasm. Functionally, plays a role in lipoprotein-mediated cholesterol uptake in hepatocytes. Binds cholesterol. Binds free fatty acids and their coenzyme A derivatives, bilirubin, and some other small molecules in the cytoplasm. May be involved in intracellular lipid transport. The protein is Fatty acid-binding protein, liver (FABP1) of Sus scrofa (Pig).